The primary structure comprises 470 residues: Cyclin-dependent kinase E-1 (470 aa).

One can recognise a Protein kinase domain in the interval 25-333 (YNLVGKIGEG…ASQALEHEYF (309 aa)). ATP contacts are provided by residues 31–39 (IGEGTYGLV) and Lys55. At Tyr36 the chain carries Phosphotyrosine. Catalysis depends on Asp154, which acts as the Proton acceptor. The segment at 428 to 470 (LNPSVPLQQQRGMAQPHQQQQLRRKDPGMGMSGYAPPNKSRRL) is disordered. Residues 432-448 (VPLQQQRGMAQPHQQQQ) show a composition bias toward polar residues.

Belongs to the protein kinase superfamily. CMGC Ser/Thr protein kinase family. CDC2/CDKX subfamily. As to quaternary structure, interacts with MED14, HDA19 and LUG. Interacts with KIN10. As to expression, expressed in roots, leaves and stems. Expressed in young dividing tissue, such as shoot and root tips, lateral root primordia, young leaves and flowers. Expressed in the inflorescence meristem, inflorescence stem and young flowers.

It localises to the nucleus. The enzyme catalyses L-seryl-[protein] + ATP = O-phospho-L-seryl-[protein] + ADP + H(+). It carries out the reaction L-threonyl-[protein] + ATP = O-phospho-L-threonyl-[protein] + ADP + H(+). The catalysed reaction is [DNA-directed RNA polymerase] + ATP = phospho-[DNA-directed RNA polymerase] + ADP + H(+). Functionally, involved in cell differentiation. Required for the specification of stamen and carpel identities and for the proper termination of stem cells in the floral meristem. The chain is Cyclin-dependent kinase E-1 (CDKE-1) from Arabidopsis thaliana (Mouse-ear cress).